Consider the following 80-residue polypeptide: Exodeoxyribonuclease 7 small subunit (80 aa).

Belongs to the XseB family. As to quaternary structure, heterooligomer composed of large and small subunits.

Its subcellular location is the cytoplasm. The enzyme catalyses Exonucleolytic cleavage in either 5'- to 3'- or 3'- to 5'-direction to yield nucleoside 5'-phosphates.. Functionally, bidirectionally degrades single-stranded DNA into large acid-insoluble oligonucleotides, which are then degraded further into small acid-soluble oligonucleotides. In Rickettsia massiliae (strain Mtu5), this protein is Exodeoxyribonuclease 7 small subunit.